Consider the following 335-residue polypeptide: 2-acylglycerol O-acyltransferase 1 (335 aa).

The next 2 membrane-spanning stretches (helical) occupy residues 24–44 (WVLSFLLLVQVCIGIMVMLVL) and 104–124 (YIFGFHPHGIFVPGAFGNFCT). N-linked (GlcNAc...) asparagine glycosylation is present at Asn180.

Belongs to the diacylglycerol acyltransferase family. Expressed at high level in kidney and stomach. Expressed at lower level in brown and white adipose tissue, uterus and liver. Not detected in small intestine.

The protein localises to the endoplasmic reticulum membrane. The enzyme catalyses a 2-acylglycerol + an acyl-CoA = a 1,2-diacylglycerol + CoA. It carries out the reaction 2-(9Z-octadecenoyl)-glycerol + butanoyl-CoA = 1-butanoyl-2-(9Z-octadecenoyl)-glycerol + CoA. It catalyses the reaction 2-(9Z-octadecenoyl)-glycerol + octanoyl-CoA = 1-octanoyl-2-(9Z-octadecenoyl)-glycerol + CoA. The catalysed reaction is 2-(9Z-octadecenoyl)-glycerol + dodecanoyl-CoA = 1-dodecanoyl-2-(9Z-octadecenoyl)-glycerol + CoA. The enzyme catalyses 2-(9Z-octadecenoyl)-glycerol + tetradecanoyl-CoA = 1-tetradecanoyl-2-(9Z-octadecenoyl)-glycerol + CoA. It carries out the reaction 2-(9Z-octadecenoyl)-glycerol + hexadecanoyl-CoA = 1-hexadecanoyl-2-(9Z-octadecenoyl)-glycerol + CoA. It catalyses the reaction 2-(9Z-octadecenoyl)-glycerol + octadecanoyl-CoA = 1-octadecanoyl-2-(9Z-octadecenoyl)-glycerol + CoA. The catalysed reaction is eicosanoyl-CoA + 2-(9Z-octadecenoyl)-glycerol = 1-eicosanoyl-2-(9Z-octadecenoyl)-glycerol + CoA. The enzyme catalyses 2-(9Z-octadecenoyl)-glycerol + (9Z)-octadecenoyl-CoA = 1,2-di-(9Z-octadecenoyl)-glycerol + CoA. It carries out the reaction 2-(9Z-octadecenoyl)-glycerol + (9Z,12Z)-octadecadienoyl-CoA = 1-(9Z,12Z-octadecadienoyl)-2-(9Z-octadecenoyl)-glycerol + CoA. It catalyses the reaction 2-(9Z-octadecenoyl)-glycerol + (5Z,8Z,11Z,14Z)-eicosatetraenoyl-CoA = 1-(5Z,8Z,11Z,14Z-eicosatetraenoyl)-2-(9Z-octadecenoyl)-glycerol + CoA. The catalysed reaction is a 2-acylglycerol + an acyl-CoA = a 1,2-diacyl-sn-glycerol + CoA. The enzyme catalyses a 2-acylglycerol + an acyl-CoA = a 2,3-diacyl-sn-glycerol + CoA. It carries out the reaction a 1-acylglycerol + an acyl-CoA = a 1,2-diacylglycerol + CoA. It catalyses the reaction 1-dodecanoylglycerol + (9Z)-octadecenoyl-CoA = 1-dodecanoyl-2-(9Z-octadecenoyl)-glycerol + CoA. The catalysed reaction is 1-tetradecanoylglycerol + (9Z)-octadecenoyl-CoA = 1-tetradecanoyl-2-(9Z-octadecenoyl)-glycerol + CoA. The enzyme catalyses 1-hexadecanoylglycerol + (9Z)-octadecenoyl-CoA = 1-hexadecanoyl-2-(9Z-octadecenoyl)-glycerol + CoA. It carries out the reaction 1-(9Z-octadecenoyl)-glycerol + (9Z)-octadecenoyl-CoA = 1,2-di-(9Z-octadecenoyl)-glycerol + CoA. It catalyses the reaction 1-(9Z,12Z-octadecadienoyl)-glycerol + (9Z)-octadecenoyl-CoA = 1-(9Z,12Z-octadecadienoyl)-2-(9Z-octadecenoyl)-glycerol + CoA. The catalysed reaction is 1-(9Z,12Z,15Z-octadecatrienoyl)-glycerol + (9Z)-octadecenoyl-CoA = 1-(9Z,12Z,15Z-octadecatrienoyl)-2-(9Z-octadecenoyl)-glycerol + CoA. The enzyme catalyses 1-(5Z,8Z,11Z,14Z-eicosatetraenoyl)-glycerol + (9Z)-octadecenoyl-CoA = 1-(5Z,8Z,11Z,14Z-eicosatetraenoyl)-2-(9Z-octadecenoyl)-glycerol + CoA. It carries out the reaction a 1-acylglycerol + an acyl-CoA = a 1,3-diacylglycerol + CoA. It catalyses the reaction 1-dodecanoylglycerol + (9Z)-octadecenoyl-CoA = 1-dodecanoyl-3-(9Z-octadecenoyl)-glycerol + CoA. The catalysed reaction is 1-hexadecanoylglycerol + (9Z)-octadecenoyl-CoA = 1-(9Z-octadecenoyl)-3-hexadecanoylglycerol + CoA. The enzyme catalyses 1-octadecanoylglycerol + (9Z)-octadecenoyl-CoA = 1-octadecanoyl-3-(9Z-octadecenoyl)-glycerol + CoA. It carries out the reaction 1-(9Z-octadecenoyl)-sn-glycerol + (9Z)-octadecenoyl-CoA = 1,3-di-(9Z-octadecenoyl)-glycerol + CoA. It catalyses the reaction 1-(9Z,12Z-octadecadienoyl)-glycerol + (9Z)-octadecenoyl-CoA = 1-(9Z-octadecenoyl)-3-(9Z,12Z-octadecadienoyl)-glycerol + CoA. The catalysed reaction is 1-(9Z,12Z,15Z-octadecatrienoyl)-glycerol + (9Z)-octadecenoyl-CoA = 1-(9Z,12Z,15Z-octadecatrienoyl)-3-(9Z-octadecenoyl)-glycerol + CoA. The enzyme catalyses a 1-acyl-sn-glycerol + an acyl-CoA = a 1,3-diacyl-sn-glycerol + CoA. It carries out the reaction a 3-acyl-sn-glycerol + an acyl-CoA = a 1,3-diacyl-sn-glycerol + CoA. It catalyses the reaction 3-octadecanoyl-sn-glycerol + (9Z)-octadecenoyl-CoA = 1-(9Z-octadecenoyl)-3-octadecanoyl-sn-glycerol + CoA. It functions in the pathway glycerolipid metabolism; triacylglycerol biosynthesis. Its function is as follows. Involved in glycerolipid synthesis and lipid metabolism. Catalyzes the formation of diacylglycerol, the precursor of triacylglycerol, by transferring the acyl chain of a fatty acyl-CoA to a monoacylglycerol, mainly at the sn-1 or sn-3 positions. It uses both sn-2-monoacylglycerol (2-acylglycerol) and sn-1-monoacylglycerol (1-acyl-sn-glycerol) equally well as substrates, and uses sn-3-monoacylglycerol (3-acyl-sn-glycerol) with lower efficiency. Probably not involved in absorption of dietary fat in the small intestine. This is 2-acylglycerol O-acyltransferase 1 from Mus musculus (Mouse).